The sequence spans 543 residues: 2,3-bisphosphoglycerate-independent phosphoglycerate mutase (543 aa).

D20 and S73 together coordinate Mn(2+). The active-site Phosphoserine intermediate is S73. Substrate is bound by residues H134, 166–167, R198, R204, 278–281, and K360; these read RD and RGDR. Residues D428, H432, D469, H470, and H488 each coordinate Mn(2+).

It belongs to the BPG-independent phosphoglycerate mutase family. In terms of assembly, monomer. Mn(2+) is required as a cofactor.

The enzyme catalyses (2R)-2-phosphoglycerate = (2R)-3-phosphoglycerate. The protein operates within carbohydrate degradation; glycolysis; pyruvate from D-glyceraldehyde 3-phosphate: step 3/5. In terms of biological role, catalyzes the interconversion of 2-phosphoglycerate and 3-phosphoglycerate. This chain is 2,3-bisphosphoglycerate-independent phosphoglycerate mutase, found in Rhodopirellula baltica (strain DSM 10527 / NCIMB 13988 / SH1).